The primary structure comprises 705 residues: Polyribonucleotide nucleotidyltransferase (705 aa).

Asp-486 and Asp-492 together coordinate Mg(2+). The 60-residue stretch at 553–612 (PQFHTMKVDPEKIRDIIGKGGATIRSITEETGASIDIDDDGTVKIYGDDGDSLQGAINRI) folds into the KH domain. Residues 622–690 (GEVYKGKVVR…QRGRIKLSIK (69 aa)) form the S1 motif domain.

Belongs to the polyribonucleotide nucleotidyltransferase family. Component of the RNA degradosome, which is a multiprotein complex involved in RNA processing and mRNA degradation. The cofactor is Mg(2+).

Its subcellular location is the cytoplasm. It catalyses the reaction RNA(n+1) + phosphate = RNA(n) + a ribonucleoside 5'-diphosphate. Involved in mRNA degradation. Catalyzes the phosphorolysis of single-stranded polyribonucleotides processively in the 3'- to 5'-direction. This chain is Polyribonucleotide nucleotidyltransferase, found in Teredinibacter turnerae (strain ATCC 39867 / T7901).